The following is a 439-amino-acid chain: tRNA(Ile)-lysidine synthase (439 aa).

An ATP-binding site is contributed by S23–S28.

The protein belongs to the tRNA(Ile)-lysidine synthase family.

The protein resides in the cytoplasm. It carries out the reaction cytidine(34) in tRNA(Ile2) + L-lysine + ATP = lysidine(34) in tRNA(Ile2) + AMP + diphosphate + H(+). Ligates lysine onto the cytidine present at position 34 of the AUA codon-specific tRNA(Ile) that contains the anticodon CAU, in an ATP-dependent manner. Cytidine is converted to lysidine, thus changing the amino acid specificity of the tRNA from methionine to isoleucine. The protein is tRNA(Ile)-lysidine synthase of Methylococcus capsulatus (strain ATCC 33009 / NCIMB 11132 / Bath).